We begin with the raw amino-acid sequence, 1245 residues long: Structural polyprotein (1245 aa).

The segment at 1-106 is disordered; the sequence is MNRGFFNMLG…KPKPGKRQRM (106 aa). A host transcription inhibition region spans residues 37–70; that stretch reads GLASQIQQLTTAVSALVIGQATRPQPPRPRPPPR. Residues 38–49 show a composition bias toward polar residues; the sequence is LASQIQQLTTAV. A Nuclear localization signal motif is present at residues 63–100; that stretch reads PRPRPPPRQKKQAPKQPPKPKKPKTQEKKKKQPAKPKP. The span at 67–106 shows a compositional bias: basic residues; it reads PPPRQKKQAPKQPPKPKKPKTQEKKKKQPAKPKPGKRQRM. The binding to the viral RNA stretch occupies residues 86 to 115; that stretch reads KTQEKKKKQPAKPKPGKRQRMALKLEADRL. Positions 100-114 are ribosome-binding; that stretch reads PGKRQRMALKLEADR. One can recognise a Peptidase S3 domain in the interval 114–264; the sequence is RLFDVKNEDG…KTTPEGTEEW (151 aa). The Charge relay system role is filled by histidine 141. The Nuclear export signal motif lies at 146 to 156; sequence IDHPVLSKLKF. Residues 157 to 162 are interaction with spike glycoprotein E2; sequence TKSSAY. The active-site Charge relay system is the aspartate 163. The segment at 185 to 195 is dimerization of the capsid protein; sequence PEGFYNWHHGA. The active-site Charge relay system is serine 215. The tract at residues 221–225 is dimerization of the capsid protein; sequence DNSGR. Positions 249–253 are interaction with spike glycoprotein E2; that stretch reads SKGKT. Residues 265–279 form a functions as an uncleaved signal peptide for the precursor of protein E3/E2 region; that stretch reads SAAPLVTAMCLLGNV. Asparagine 278 carries an N-linked (GlcNAc...) asparagine; by host glycan. 4 cysteine pairs are disulfide-bonded: cysteine 283/cysteine 289, cysteine 480/cysteine 594, cysteine 529/cysteine 554, and cysteine 531/cysteine 548. At 329 to 690 the chain is on the extracellular side; it reads SVIDDFTLTS…HEIVQHYYHR (362 aa). Residue asparagine 524 is glycosylated (N-linked (GlcNAc...) asparagine; by host). N-linked (GlcNAc...) asparagine; by host glycosylation is present at asparagine 646. Positions 682–730 form a coiled coil; the sequence is EIVQHYYHRHPVYTILAVASATVAMMIGVTVAVLCACKARRECLTPYAL. The chain crosses the membrane as a helical span at residues 691–718; the sequence is HPVYTILAVASATVAMMIGVTVAVLCAC. The interaction with the capsid protein stretch occupies residues 719 to 723; it reads KARRE. Over 719–751 the chain is Cytoplasmic; that stretch reads KARRECLTPYALAPNAVIPTSLALLCCVRSANA. S-palmitoyl cysteine; by host attachment occurs at residues cysteine 724, cysteine 744, and cysteine 745. An intrachain disulfide couples cysteine 724 to cysteine 745. At 752–763 the chain is on the extracellular side; sequence ETFTETMSYLWS. A helical transmembrane segment spans residues 764-784; it reads NSQPFFWVQLCIPLAAFIVLM. Position 785 (arginine 785) is a topological domain, cytoplasmic. The helical transmembrane segment at 786 to 806 threads the bilayer; that stretch reads CCSCCLPFLVVAGAYLAKVDA. Residues 807 to 1214 lie on the Extracellular side of the membrane; that stretch reads YEHATTVPNV…QAAISKTSWS (408 aa). Disulfide bonds link cysteine 855–cysteine 920, cysteine 868–cysteine 900, cysteine 869–cysteine 902, and cysteine 874–cysteine 884. The E1 fusion peptide loop stretch occupies residues 890–907; the sequence is VYPFMWGGAQCFCDSENS. Residues asparagine 945 and asparagine 1051 are each glycosylated (N-linked (GlcNAc...) asparagine; by host). Intrachain disulfides connect cysteine 1065–cysteine 1077, cysteine 1107–cysteine 1182, cysteine 1112–cysteine 1186, and cysteine 1134–cysteine 1176. Positions 1196 to 1245 form a coiled coil; it reads TPHKNDQEFQAAISKTSWSWLFALFGGASSLLIIGLMIFACSMMLTSTRR. Residues 1215 to 1239 form a helical membrane-spanning segment; the sequence is WLFALFGGASSLLIIGLMIFACSMM. Topologically, residues 1240-1245 are cytoplasmic; it reads LTSTRR.

This sequence belongs to the alphavirus structural polyprotein family. As to quaternary structure, homomultimer. Interacts with host karyopherin KPNA4; this interaction allows the nuclear import of the viral capsid protein. Interacts with spike glycoprotein E2. Interacts with host IRAK1; the interaction leads to inhibition of IRAK1-dependent signaling. The precursor of protein E3/E2 and E1 form a heterodimer shortly after synthesis. In terms of assembly, the precursor of protein E3/E2 and E1 form a heterodimer shortly after synthesis. Processing of the precursor of protein E3/E2 into E2 and E3 results in a heterodimer of the spike glycoproteins E2 and E1. Spike at virion surface are constituted of a trimer of E2-E1 heterodimers. After target cell attachment and endocytosis, E1 change conformation to form homotrimers. E2-E1 heterodimers interact with host VLDLR or LRP8/APOER2 to mediate viral entry. Interacts with 6K protein. As to quaternary structure, interacts with spike glycoprotein E1. Processing of the precursor of protein E3/E2 into E2 and E3 results in a heterodimer of the spike glycoproteins E2 and E1. Spike at virion surface are constituted of a trimer of E2-E1 heterodimers. E2-E1 heterodimers interact with host VLDLR or LRP8/APOER2 to mediate viral entry. Interacts with 6K protein. Interacts with the capsid protein. Oligomer. Interacts with spike glycoprotein E1. Interacts with spike glycoprotein E2. Post-translationally, specific enzymatic cleavages in vivo yield mature proteins. Capsid protein is auto-cleaved during polyprotein translation, unmasking a signal peptide at the N-terminus of the precursor of E3/E2. The remaining polyprotein is then targeted to the host endoplasmic reticulum, where host signal peptidase cleaves it into pE2, 6K and E1 proteins. pE2 is further processed to mature E3 and E2 by host furin in trans-Golgi vesicle. Palmitoylated via thioester bonds. These palmitoylations may induce disruption of the C-terminus transmembrane. This would result in the reorientation of E2 C-terminus from lumenal to cytoplasmic side. In terms of processing, N-glycosylated. Post-translationally, palmitoylated via thioester bonds.

The protein resides in the virion. The protein localises to the host cytoplasm. Its subcellular location is the host cell membrane. It is found in the host nucleus. It localises to the virion membrane. The protein resides in the host Golgi apparatus. The protein localises to the host trans-Golgi network. Its subcellular location is the host endoplasmic reticulum. The enzyme catalyses Autocatalytic release of the core protein from the N-terminus of the togavirus structural polyprotein by hydrolysis of a -Trp-|-Ser- bond.. With respect to regulation, the channel activity is blocked by 5-N, N-Hexamethylene amiloride. Forms an icosahedral capsid with a T=4 symmetry composed of 240 copies of the capsid protein surrounded by a lipid membrane through which penetrate 80 spikes composed of trimers of E1-E2 heterodimers. The capsid protein binds to the viral RNA genome at a site adjacent to a ribosome binding site for viral genome translation following genome release. Possesses a protease activity that results in its autocatalytic cleavage from the nascent structural protein. Following its self-cleavage, the capsid protein transiently associates with ribosomes, and within several minutes the protein binds to viral RNA and rapidly assembles into icosahedric core particles. The resulting nucleocapsid eventually associates with the cytoplasmic domain of the spike glycoprotein E2 at the cell membrane, leading to budding and formation of mature virions. In case of infection, new virions attach to target cells and after clathrin-mediated endocytosis their membrane fuses with the host endosomal membrane. This leads to the release of the nucleocapsid into the cytoplasm, followed by an uncoating event necessary for the genomic RNA to become accessible. The uncoating might be triggered by the interaction of capsid proteins with ribosomes. Binding of ribosomes would release the genomic RNA since the same region is genomic RNA-binding and ribosome-binding. Specifically inhibits interleukin-1 receptor-associated kinase 1/IRAK1-dependent signaling during viral entry, representing a means by which the alphaviruses may evade innate immune detection and activation prior to viral gene expression. In terms of biological role, provides the signal sequence for the translocation of the precursor of protein E3/E2 to the host endoplasmic reticulum. Furin-cleaved E3 remains associated with spike glycoprotein E1 and mediates pH protection of the latter during the transport via the secretory pathway. After virion release from the host cell, the assembly protein E3 is gradually released in the extracellular space. Its function is as follows. Plays a role in viral attachment to target host cell, by binding to the cell receptors VLDLR or LRP8/APOER2. Synthesized as a pE2 precursor which is processed by furin at the cell membrane just before virion budding, giving rise to E2-E1 heterodimer. The pE2-E1 heterodimer is stable, whereas E2-E1 is unstable and dissociate at low pH. pE2 is processed at the last step, presumably to avoid E1 fusion activation before its final export to cell surface. E2 C-terminus contains a transitory transmembrane that would be disrupted by palmitoylation, resulting in reorientation of the C-terminal tail from lumenal to cytoplasmic side. This step is critical since E2 C-terminus is involved in budding by interacting with capsid proteins. This release of E2 C-terminus in cytoplasm occurs lately in protein export, and precludes premature assembly of particles at the endoplasmic reticulum membrane. Functionally, acts as a viroporin that participates in virus glycoprotein processing and transport to the plasma membrane, cell permeabilization and budding of viral particles. Disrupts the calcium homeostasis of the cell, probably at the endoplasmic reticulum level resulting in the increased levels of cytoplasmic calcium. Because of its lipophilic properties, the 6K protein is postulated to influence the selection of lipids that interact with the transmembrane domains of the glycoproteins, which, in turn, affects the deformability of the bilayer required for the extreme curvature that occurs as budding proceeds. Present in low amount in virions, about 3% compared to viral glycoproteins. Class II viral fusion protein. Fusion activity is inactive as long as E1 is bound to E2 in mature virion. After virus attachment to target cell via host VLDLR or LRP8/APOER2 and endocytosis, acidification of the endosome induces dissociation of E1/E2 heterodimer and concomitant trimerization of the E1 subunits. This E1 trimer is fusion active, and promotes release of viral nucleocapsid in cytoplasm after endosome and viral membrane fusion. Efficient fusion requires the presence of cholesterol and sphingolipid in the target membrane. The chain is Structural polyprotein from Acrocephalus scirpaceus (Eurasian reed-warbler).